A 59-amino-acid chain; its full sequence is Protein translocase subunit SecE (59 aa).

Residues 39–59 (VMALFLGLIDALFVALLSFFF) form a helical membrane-spanning segment.

Belongs to the SecE/SEC61-gamma family. Component of the Sec protein translocase complex. Heterotrimer consisting of SecY, SecE and SecG subunits. The heterotrimers can form oligomers, although 1 heterotrimer is thought to be able to translocate proteins. Interacts with the ribosome. Interacts with SecDF, and other proteins may be involved. Interacts with SecA.

The protein localises to the cell inner membrane. Its function is as follows. Essential subunit of the Sec protein translocation channel SecYEG. Clamps together the 2 halves of SecY. May contact the channel plug during translocation. The protein is Protein translocase subunit SecE of Treponema pallidum (strain Nichols).